We begin with the raw amino-acid sequence, 295 residues long: Golgi-associated RAB2 interactor protein 1A (295 aa).

The tract at residues 187–206 is disordered; that stretch reads MPNSSTETTPESSRPASSQS. Low complexity predominate over residues 190 to 206; the sequence is SSTETTPESSRPASSQS. Phosphoserine is present on residues Ser220, Ser221, Ser251, and Ser255.

This sequence belongs to the GARIN family. In terms of assembly, interacts (via N-terminus) with RAB2B (in GTP-bound form).

It is found in the golgi apparatus. In terms of biological role, RAB2B effector protein required for accurate acrosome formation and normal male fertility. The protein is Golgi-associated RAB2 interactor protein 1A (Garin1a) of Rattus norvegicus (Rat).